The primary structure comprises 293 residues: MPWIQLKLNTTGANAEDLSDALMEAGAVSITFQDTHDTPVFEPLPGETRLWGDTDVIGLFDAETDMNDVVAILENHPLLGAGFAHKIEQLEDKDWEREWMDNFHPMRFGERLWICPSWRDVPDENAVNVMLDPGLAFGTGTHPTTSLCLQWLDSLDLTGKTVIDFGCGSGILAIAALKLGAAKAIGIDIDPQAIQASRDNAERNGVSDRLELYLPKDQPEAMKADVVVANILAGPLRELAPLISVLPVSGGLLGLSGILASQAESVCEAYADSFALDPVVEKEEWCRITGRKN.

Thr-145, Gly-166, Asp-188, and Asn-230 together coordinate S-adenosyl-L-methionine.

This sequence belongs to the methyltransferase superfamily. PrmA family.

The protein localises to the cytoplasm. The enzyme catalyses L-lysyl-[protein] + 3 S-adenosyl-L-methionine = N(6),N(6),N(6)-trimethyl-L-lysyl-[protein] + 3 S-adenosyl-L-homocysteine + 3 H(+). In terms of biological role, methylates ribosomal protein L11. The protein is Ribosomal protein L11 methyltransferase of Escherichia coli (strain SMS-3-5 / SECEC).